The primary structure comprises 242 residues: tRNA1(Val) (adenine(37)-N6)-methyltransferase (242 aa).

The protein belongs to the methyltransferase superfamily. tRNA (adenine-N(6)-)-methyltransferase family.

Its subcellular location is the cytoplasm. The catalysed reaction is adenosine(37) in tRNA1(Val) + S-adenosyl-L-methionine = N(6)-methyladenosine(37) in tRNA1(Val) + S-adenosyl-L-homocysteine + H(+). Specifically methylates the adenine in position 37 of tRNA(1)(Val) (anticodon cmo5UAC). The chain is tRNA1(Val) (adenine(37)-N6)-methyltransferase from Mannheimia succiniciproducens (strain KCTC 0769BP / MBEL55E).